A 360-amino-acid polypeptide reads, in one-letter code: Membrane-bound lytic murein transglycosylase C (360 aa).

The signal sequence occupies residues 1 to 16 (MKKFFALALVAPLLIS). A lipid anchor (N-palmitoyl cysteine) is attached at Cys-17. The S-diacylglycerol cysteine moiety is linked to residue Cys-17.

This sequence belongs to the transglycosylase Slt family.

It is found in the cell outer membrane. It carries out the reaction Exolytic cleavage of the (1-&gt;4)-beta-glycosidic linkage between N-acetylmuramic acid (MurNAc) and N-acetylglucosamine (GlcNAc) residues in peptidoglycan, from either the reducing or the non-reducing ends of the peptidoglycan chains, with concomitant formation of a 1,6-anhydrobond in the MurNAc residue.. Its function is as follows. Murein-degrading enzyme. May play a role in recycling of muropeptides during cell elongation and/or cell division. This is Membrane-bound lytic murein transglycosylase C from Citrobacter koseri (strain ATCC BAA-895 / CDC 4225-83 / SGSC4696).